The chain runs to 392 residues: Chaperone protein DnaJ (392 aa).

In terms of domain architecture, J spans 2–67 (DYYDVLGVSK…QKRESYDRYG (66 aa)). Residues 149–227 (GVEKELLVSG…CRGQGRIKDK (79 aa)) form a CR-type zinc finger. Cysteine 162, cysteine 165, cysteine 179, cysteine 182, cysteine 201, cysteine 204, cysteine 215, and cysteine 218 together coordinate Zn(2+). CXXCXGXG motif repeat units follow at residues 162-169 (CETCLGSG), 179-186 (CDRCKGSG), 201-208 (CPECGGEG), and 215-222 (CSNCRGQG).

Belongs to the DnaJ family. Homodimer. It depends on Zn(2+) as a cofactor.

It is found in the cytoplasm. In terms of biological role, participates actively in the response to hyperosmotic and heat shock by preventing the aggregation of stress-denatured proteins and by disaggregating proteins, also in an autonomous, DnaK-independent fashion. Unfolded proteins bind initially to DnaJ; upon interaction with the DnaJ-bound protein, DnaK hydrolyzes its bound ATP, resulting in the formation of a stable complex. GrpE releases ADP from DnaK; ATP binding to DnaK triggers the release of the substrate protein, thus completing the reaction cycle. Several rounds of ATP-dependent interactions between DnaJ, DnaK and GrpE are required for fully efficient folding. Also involved, together with DnaK and GrpE, in the DNA replication of plasmids through activation of initiation proteins. The protein is Chaperone protein DnaJ of Chlamydia caviae (strain ATCC VR-813 / DSM 19441 / 03DC25 / GPIC) (Chlamydophila caviae).